A 432-amino-acid chain; its full sequence is uncharacterized protein (432 aa).

Disordered stretches follow at residues 37 to 61 (DGIG…SADC), 127 to 151 (RDHD…DTRY), and 298 to 378 (SVSS…NHQC). Polar residues predominate over residues 312–335 (DSSTLANTQGFREDQSQQQHTPSP). A compositionally biased stretch (low complexity) spans 341–366 (SSLSHQFHQSIHQSHQHHQSIYQSQH).

This is an uncharacterized protein from Arabidopsis thaliana (Mouse-ear cress).